The following is a 1028-amino-acid chain: Receptor-type guanylate cyclase gcy-13 (1028 aa).

N-linked (GlcNAc...) asparagine glycans are attached at residues N58, N156, N324, N337, N377, and N394. Residues 438–458 form a helical membrane-spanning segment; it reads IVVIVAVIIVLCCAAAAIAAF. Residues 459–1028 lie on the Cytoplasmic side of the membrane; the sequence is LVIKARRDEE…WLLGMKEESA (570 aa). The tract at residues 491–511 is disordered; the sequence is ESHHSSRSLQSNSTTTTGTTG. Positions 497–511 are enriched in low complexity; that stretch reads RSLQSNSTTTTGTTG. In terms of domain architecture, Protein kinase spans 499 to 770; sequence LQSNSTTTTG…DMVNKLMKNM (272 aa). Positions 786 to 817 form a coiled coil; that stretch reads SVLEKHASSLEDEVQERMKELVEEKKKSDILL. The Guanylate cyclase domain maps to 844 to 974; sequence TIFFSDVVGF…DTVNTASRME (131 aa).

The protein belongs to the adenylyl cyclase class-4/guanylyl cyclase family. As to expression, expressed bilaterally in RIM interneurons.

It localises to the cell membrane. It catalyses the reaction GTP = 3',5'-cyclic GMP + diphosphate. Guanylate cyclase involved in the production of the second messenger cGMP. This chain is Receptor-type guanylate cyclase gcy-13, found in Caenorhabditis elegans.